A 201-amino-acid chain; its full sequence is Inosine triphosphate pyrophosphatase (201 aa).

16–21 serves as a coordination point for ITP; it reads TGNAKK. Mg(2+) is bound at residue Glu-44. ITP-binding positions include Lys-56, 72 to 73, Lys-89, 148 to 151, Lys-171, and 176 to 177; these read DT, FGWD, and HR.

This sequence belongs to the HAM1 NTPase family. In terms of assembly, homodimer. Requires Mg(2+) as cofactor. The cofactor is Mn(2+).

The protein resides in the cytoplasm. The enzyme catalyses ITP + H2O = IMP + diphosphate + H(+). It catalyses the reaction dITP + H2O = dIMP + diphosphate + H(+). The catalysed reaction is XTP + H2O = XMP + diphosphate + H(+). Functionally, pyrophosphatase that hydrolyzes non-canonical purine nucleotides such as inosine triphosphate (ITP), deoxyinosine triphosphate (dITP) or xanthosine 5'-triphosphate (XTP) to their respective monophosphate derivatives. The enzyme does not distinguish between the deoxy- and ribose forms. Probably excludes non-canonical purines from RNA and DNA precursor pools, thus preventing their incorporation into RNA and DNA and avoiding chromosomal lesions. This Zea mays (Maize) protein is Inosine triphosphate pyrophosphatase.